Reading from the N-terminus, the 264-residue chain is Carbonic anhydrase (264 aa).

Residues 1-33 constitute a signal peptide (tat-type signal); sequence MSSTLYRRQLLKLLGMSVLGTSFSSCVTSPARA. The 229-residue stretch at 36 to 264 folds into the Alpha-carbonic anhydrase domain; the sequence is VNWGYIGKVG…LNDRLVIEAI (229 aa). Zn(2+) contacts are provided by histidine 127, histidine 129, and histidine 146. Substrate is bound at residue 214–215; sequence TT.

This sequence belongs to the alpha-carbonic anhydrase family. Requires Zn(2+) as cofactor. In terms of processing, predicted to be exported by the Tat system. The position of the signal peptide cleavage has not been experimentally proven.

The enzyme catalyses hydrogencarbonate + H(+) = CO2 + H2O. Reversible hydration of carbon dioxide. This chain is Carbonic anhydrase (ecaA), found in Nostoc sp. (strain PCC 7120 / SAG 25.82 / UTEX 2576).